Here is a 579-residue protein sequence, read N- to C-terminus: Fatty-acid amide hydrolase 1 (579 aa).

The helical transmembrane segment at 9 to 29 (ALPGASGVALACCFVAAAVAL) threads the bilayer. Topologically, residues 30–403 (RWSGRRTARG…GDFVDPCLGD (374 aa)) are cytoplasmic. The active-site Charge relay system is K142. Substrate is bound by residues M191, S217, and 238 to 241 (IGGS). S217 functions as the Charge relay system in the catalytic mechanism. The active-site Acyl-ester intermediate is S241. S241 is subject to Phosphoserine. An intramembrane segment occupies 404–433 (LVSILKLPQWLKGLLAFLVKPLLPRLSAFL). Topologically, residues 434 to 579 (SNMKSRSAGK…RLMTPEKQSS (146 aa)) are cytoplasmic.

The protein belongs to the amidase family. Homodimer. As to expression, highly expressed in the brain, small intestine, pancreas, skeletal muscle and testis. Also expressed in the kidney, liver, lung, placenta and prostate.

It is found in the endomembrane system. Its subcellular location is the cytoplasm. The protein resides in the cytoskeleton. The catalysed reaction is N-(5Z,8Z,11Z,14Z-eicosatetraenoyl)-ethanolamine + H2O = ethanolamine + (5Z,8Z,11Z,14Z)-eicosatetraenoate. It catalyses the reaction (9Z)-octadecenamide + H2O = (9Z)-octadecenoate + NH4(+). It carries out the reaction 2-(5Z,8Z,11Z,14Z-eicosatetraenoyl)-glycerol + H2O = glycerol + (5Z,8Z,11Z,14Z)-eicosatetraenoate + H(+). The enzyme catalyses N-(9Z-octadecenoyl) ethanolamine + H2O = ethanolamine + (9Z)-octadecenoate. The catalysed reaction is N-hexadecanoylethanolamine + H2O = ethanolamine + hexadecanoate. It catalyses the reaction hexadecanamide + H2O = hexadecanoate + NH4(+). It carries out the reaction tetradecamide + H2O = tetradecanoate + NH4(+). The enzyme catalyses N-(9Z-octadecenoyl)-taurine + H2O = taurine + (9Z)-octadecenoate. The catalysed reaction is (9Z,12Z,15Z)-octadecatrienamide + H2O = (9Z,12Z,15Z)-octadecatrienoate + NH4(+). It catalyses the reaction (5Z,8Z,11Z,14Z)-eicosatetraenamide + H2O = (5Z,8Z,11Z,14Z)-eicosatetraenoate + NH4(+). It carries out the reaction (6Z)-octadecenamide + H2O = (6Z)-octadecenoate + NH4(+). The enzyme catalyses (15Z)-tetracosenamide + H2O = (15Z)-tetracosenoate + NH4(+). The catalysed reaction is (8Z,11Z,14Z)-eicosatrienamide + H2O = (8Z,11Z,14Z)-eicosatrienoate + NH4(+). It catalyses the reaction (11Z,14Z,17Z)-eicosatrienamide + H2O = (11Z,14Z,17Z)-eicosatrienoate + NH4(+). It carries out the reaction (11Z,14Z)-eicosadienamide + H2O = (11Z,14Z)-eicosadienoate + NH4(+). The enzyme catalyses (9Z,12Z)-octadecadienamide + H2O = (9Z,12Z)-octadecadienoate + NH4(+). The catalysed reaction is 1-O-methyl-(5Z,8Z,11Z,14Z)-eicosatetraenoate + H2O = methanol + (5Z,8Z,11Z,14Z)-eicosatetraenoate + H(+). It catalyses the reaction (11Z)-eicosenamide + H2O = (11Z)-eicosenoate + NH4(+). It carries out the reaction N-(9Z-hexadecenoyl) ethanolamine + H2O = (9Z)-hexadecenoate + ethanolamine. The enzyme catalyses N-octadecanoyl ethanolamine + H2O = octadecanoate + ethanolamine. The catalysed reaction is N-docosanoyl-ethanolamine + H2O = docosanoate + ethanolamine. It catalyses the reaction N-tetracosanoyl-taurine + H2O = tetracosanoate + taurine. It carries out the reaction N-(15Z-tetracosenoyl)-ethanolamine + H2O = (15Z)-tetracosenoate + ethanolamine. The enzyme catalyses N-docosanoyl-taurine + H2O = docosanoate + taurine. The catalysed reaction is N-(15Z-tetracosenoyl)-taurine + H2O = (15Z)-tetracosenoate + taurine. It catalyses the reaction N-tricosanoyl-taurine + H2O = tricosanoate + taurine. It carries out the reaction (9Z)-octadecenoate + glycine = N-(9Z-octadecenoyl)glycine + H2O. The enzyme catalyses N-(5Z,8Z,11Z,14Z)-eicosatetraenoyl-glycine + H2O = (5Z,8Z,11Z,14Z)-eicosatetraenoate + glycine. The catalysed reaction is N-(5Z,8Z,11Z,14Z-eicosatetraenoyl)-L-serine + H2O = (5Z,8Z,11Z,14Z)-eicosatetraenoate + L-serine. With respect to regulation, inhibited by O-aryl carbamates and alpha-keto heterocycles. Inhibited by trifluoromethyl ketone. Its function is as follows. Catalyzes the hydrolysis of endogenous amidated lipids like the sleep-inducing lipid oleamide ((9Z)-octadecenamide), the endocannabinoid anandamide (N-(5Z,8Z,11Z,14Z-eicosatetraenoyl)-ethanolamine), as well as other fatty amides, to their corresponding fatty acids, thereby regulating the signaling functions of these molecules. Hydrolyzes polyunsaturated substrate anandamide preferentially as compared to monounsaturated substrates. It can also catalyze the hydrolysis of the endocannabinoid 2-arachidonoylglycerol (2-(5Z,8Z,11Z,14Z-eicosatetraenoyl)-glycerol). FAAH cooperates with PM20D1 in the hydrolysis of amino acid-conjugated fatty acids such as N-fatty acyl glycine and N-fatty acyl-L-serine, thereby acting as a physiological regulator of specific subsets of intracellular, but not of extracellular, N-fatty acyl amino acids. This is Fatty-acid amide hydrolase 1 (FAAH) from Homo sapiens (Human).